The primary structure comprises 216 residues: Thymidine kinase (216 aa).

ATP contacts are provided by residues 9 to 16 (GPMDSGKS) and 86 to 89 (DEAQ). Glu87 acts as the Proton acceptor in catalysis.

The protein belongs to the thymidine kinase family. Homotetramer.

It is found in the cytoplasm. It catalyses the reaction thymidine + ATP = dTMP + ADP + H(+). This is Thymidine kinase from Cutibacterium acnes (strain DSM 16379 / KPA171202) (Propionibacterium acnes).